Consider the following 308-residue polypeptide: UDP-N-acetylenolpyruvoylglucosamine reductase (308 aa).

In terms of domain architecture, FAD-binding PCMH-type spans 22–185 (RVGGPADWLF…TEATFRAEAG (164 aa)). R165 is a catalytic residue. The segment covering 197 to 211 (QIARRDSSQPTKERS) has biased composition (basic and acidic residues). Residues 197-228 (QIARRDSSQPTKERSAGSTFRNPAGFSSTGRA) form a disordered region. The segment covering 212 to 226 (AGSTFRNPAGFSSTG) has biased composition (polar residues). The Proton donor role is filled by S214. E296 is a catalytic residue.

Belongs to the MurB family. Requires FAD as cofactor.

It is found in the cytoplasm. It catalyses the reaction UDP-N-acetyl-alpha-D-muramate + NADP(+) = UDP-N-acetyl-3-O-(1-carboxyvinyl)-alpha-D-glucosamine + NADPH + H(+). It functions in the pathway cell wall biogenesis; peptidoglycan biosynthesis. Functionally, cell wall formation. The chain is UDP-N-acetylenolpyruvoylglucosamine reductase from Cereibacter sphaeroides (strain ATCC 17023 / DSM 158 / JCM 6121 / CCUG 31486 / LMG 2827 / NBRC 12203 / NCIMB 8253 / ATH 2.4.1.) (Rhodobacter sphaeroides).